The primary structure comprises 196 residues: dITP/XTP pyrophosphatase (196 aa).

Residue 10-15 participates in substrate binding; the sequence is SGNKGK. The Mg(2+) site is built by glutamate 40 and aspartate 69. The active-site Proton acceptor is the aspartate 69. Substrate is bound by residues serine 70, 147 to 150, lysine 170, and 175 to 176; these read FGYD and HR.

This sequence belongs to the HAM1 NTPase family. As to quaternary structure, homodimer. Requires Mg(2+) as cofactor.

The catalysed reaction is XTP + H2O = XMP + diphosphate + H(+). It catalyses the reaction dITP + H2O = dIMP + diphosphate + H(+). The enzyme catalyses ITP + H2O = IMP + diphosphate + H(+). Pyrophosphatase that catalyzes the hydrolysis of nucleoside triphosphates to their monophosphate derivatives, with a high preference for the non-canonical purine nucleotides XTP (xanthosine triphosphate), dITP (deoxyinosine triphosphate) and ITP. Seems to function as a house-cleaning enzyme that removes non-canonical purine nucleotides from the nucleotide pool, thus preventing their incorporation into DNA/RNA and avoiding chromosomal lesions. The chain is dITP/XTP pyrophosphatase from Prochlorococcus marinus (strain NATL1A).